The following is a 310-amino-acid chain: Lipoyl synthase (310 aa).

[4Fe-4S] cluster-binding residues include Cys-45, Cys-50, Cys-56, Cys-71, Cys-75, Cys-78, and Ser-285. In terms of domain architecture, Radical SAM core spans 57-274; it reads WTKKHATVMI…GSIARAKGFL (218 aa).

This sequence belongs to the radical SAM superfamily. Lipoyl synthase family. Requires [4Fe-4S] cluster as cofactor.

It is found in the cytoplasm. The enzyme catalyses [[Fe-S] cluster scaffold protein carrying a second [4Fe-4S](2+) cluster] + N(6)-octanoyl-L-lysyl-[protein] + 2 oxidized [2Fe-2S]-[ferredoxin] + 2 S-adenosyl-L-methionine + 4 H(+) = [[Fe-S] cluster scaffold protein] + N(6)-[(R)-dihydrolipoyl]-L-lysyl-[protein] + 4 Fe(3+) + 2 hydrogen sulfide + 2 5'-deoxyadenosine + 2 L-methionine + 2 reduced [2Fe-2S]-[ferredoxin]. It functions in the pathway protein modification; protein lipoylation via endogenous pathway; protein N(6)-(lipoyl)lysine from octanoyl-[acyl-carrier-protein]: step 2/2. Its function is as follows. Catalyzes the radical-mediated insertion of two sulfur atoms into the C-6 and C-8 positions of the octanoyl moiety bound to the lipoyl domains of lipoate-dependent enzymes, thereby converting the octanoylated domains into lipoylated derivatives. This is Lipoyl synthase from Novosphingobium aromaticivorans (strain ATCC 700278 / DSM 12444 / CCUG 56034 / CIP 105152 / NBRC 16084 / F199).